We begin with the raw amino-acid sequence, 88 residues long: Elongation factor 1-beta (88 aa).

The protein belongs to the EF-1-beta/EF-1-delta family.

Promotes the exchange of GDP for GTP in EF-1-alpha/GDP, thus allowing the regeneration of EF-1-alpha/GTP that could then be used to form the ternary complex EF-1-alpha/GTP/AAtRNA. The protein is Elongation factor 1-beta (ef1b) of Thermoplasma volcanium (strain ATCC 51530 / DSM 4299 / JCM 9571 / NBRC 15438 / GSS1).